A 332-amino-acid chain; its full sequence is DNA packaging protein (332 aa).

The segment at 1–207 is ATPase; that stretch reads MDKSLFYNPQ…SERRKTRFGR (207 aa). 24 to 31 serves as a coordination point for ATP; the sequence is GARGIGKS. The tract at residues 233 to 332 is DNA-binding; that stretch reads KRSKDSKFVF…YELFRKMRIQ (100 aa).

This sequence belongs to the phi29likevirus gp16 family. In terms of assembly, homopentamer. Interacts with the packaging RNA (pRNA). Part of a DNA-gp3-gp16 complex.

The catalysed reaction is ATP + H2O = ADP + phosphate + H(+). Its function is as follows. ATPase required for the genome encapsidation reaction. Part of the active packaging motor via the binding to the packaging RNA (pRNA), itself fixed to the head-tail connector at the unique portal vertex of the prohead. Binds and supercoils the pre-formed, unit-length DNA bound to gp3 to produce an initiation complex for DNA packaging. Provides the energy to actively pump the viral DNA into the prohead. Approximately one molecule of ATP is used in the packaging of 2 bp of viral DNA. ATP hydrolysis results in a conformational change that causes the arginine/lysine finger of one subunit to move into the active site of its neighbor, where it interacts with the negatively charged oxygens on the gamma-phosphate of ATP. After packaging, the ATPase and the pRNA are released from the prohead. In Bacillus phage phi29 (Bacteriophage phi-29), this protein is DNA packaging protein (16).